A 346-amino-acid polypeptide reads, in one-letter code: Elongation factor Ts (346 aa).

Positions 80-83 (TDFV) are involved in Mg(2+) ion dislocation from EF-Tu.

It belongs to the EF-Ts family.

The protein localises to the cytoplasm. In terms of biological role, associates with the EF-Tu.GDP complex and induces the exchange of GDP to GTP. It remains bound to the aminoacyl-tRNA.EF-Tu.GTP complex up to the GTP hydrolysis stage on the ribosome. In Streptococcus pyogenes serotype M3 (strain ATCC BAA-595 / MGAS315), this protein is Elongation factor Ts.